Reading from the N-terminus, the 68-residue chain is DNA-directed RNA polymerase subunit omega (68 aa).

The protein belongs to the RNA polymerase subunit omega family. The RNAP catalytic core consists of 2 alpha, 1 beta, 1 beta' and 1 omega subunit. When a sigma factor is associated with the core the holoenzyme is formed, which can initiate transcription.

It carries out the reaction RNA(n) + a ribonucleoside 5'-triphosphate = RNA(n+1) + diphosphate. Functionally, promotes RNA polymerase assembly. Latches the N- and C-terminal regions of the beta' subunit thereby facilitating its interaction with the beta and alpha subunits. The protein is DNA-directed RNA polymerase subunit omega of Ruminiclostridium cellulolyticum (strain ATCC 35319 / DSM 5812 / JCM 6584 / H10) (Clostridium cellulolyticum).